Here is a 195-residue protein sequence, read N- to C-terminus: Probable molybdenum cofactor guanylyltransferase (195 aa).

GTP-binding positions include 9–11, K21, D69, and D100; that span reads LAG. D100 is a binding site for Mg(2+).

It belongs to the MobA family. The cofactor is Mg(2+).

The protein localises to the cytoplasm. It catalyses the reaction Mo-molybdopterin + GTP + H(+) = Mo-molybdopterin guanine dinucleotide + diphosphate. Its function is as follows. Transfers a GMP moiety from GTP to Mo-molybdopterin (Mo-MPT) cofactor (Moco or molybdenum cofactor) to form Mo-molybdopterin guanine dinucleotide (Mo-MGD) cofactor. The chain is Probable molybdenum cofactor guanylyltransferase from Geobacillus sp. (strain WCH70).